Reading from the N-terminus, the 1203-residue chain is Kinesin-like protein KIN-14Q (1203 aa).

Residues 1 to 28 (MEDCCDPLLATDASPRPESFSRSEKDIA) are disordered. The span at 19–28 (SFSRSEKDIA) shows a compositional bias: basic and acidic residues. Positions 336 to 395 (ENLVCRAEEEAEGMRSDCEQQRKEMEDMKRMVEELKLENQQKTRECEEALNSLSEIQNEL) form a coiled coil. The 327-residue stretch at 499 to 825 (NIRVFCRCRP…LNFASRVRGI (327 aa)) folds into the Kinesin motor domain. 582-589 (GQTGTGKT) lines the ATP pocket. Residues 846–901 (VEKWKQDMKGKDEQIRKMEETMYGLEAKIKERDTKNKTLQDKVKELESQLLVERKL) are a coiled coil. Residues 907–931 (DTKIAEQQTKQQTEDENNTSKRPPL) form a disordered region.

It belongs to the TRAFAC class myosin-kinesin ATPase superfamily. Kinesin family. KIN-14 subfamily.

This chain is Kinesin-like protein KIN-14Q, found in Arabidopsis thaliana (Mouse-ear cress).